We begin with the raw amino-acid sequence, 1005 residues long: Small G protein signaling modulator 2 (1005 aa).

In terms of domain architecture, RUN spans 34–191 (HEDSSHIIAL…EYTKLKTADH (158 aa)). Disordered stretches follow at residues 95-121 (QAEGRKPSGGSQEALRKQGSTGGKAPA) and 205-236 (HRIRGPPNRQDSPAKRPALGIRKRHSSGSASE). S402 and L444 each carry phosphoserine. Positions 566-938 (GVEHEIRKDV…AVWEVIWAAR (373 aa)) constitute a Rab-GAP TBC domain. Disordered regions lie at residues 657-687 (FISVDDLEPSGPQDLEDSKPKREQEPGAGTP) and 729-761 (GFEDDGAGEDGSEGPATAAHTFPGPHDPGQETL). Over residues 672–681 (EDSKPKREQE) the composition is skewed to basic and acidic residues. Residues 730 to 740 (FEDDGAGEDGS) show a composition bias toward acidic residues.

Belongs to the RUTBC family. As to quaternary structure, interacts with RAB4A, RAB11A, RAP1A, RAP1B, RAP2A and RAP2B. No interaction with RAB27A. Interacts with RAB9A. In terms of tissue distribution, widely expressed.

The protein resides in the cytoplasm. Its subcellular location is the melanosome. Its function is as follows. Possesses GTPase activator activity towards RAB32, RAB33B and RAB38. Regulates the trafficking of melanogenic enzymes TYR, TYRP1 and DCT/TYRP2 to melanosomes in melanocytes by inactivating RAB32 and RAB38. Inhibits RAB32 and RAB38 activation both directly by promoting their GTPase activity and indirectly by disrupting the RAB9A-HPS4 interaction which is required for RAB32/38 activation. The protein is Small G protein signaling modulator 2 (Sgsm2) of Mus musculus (Mouse).